A 533-amino-acid polypeptide reads, in one-letter code: Na(+)/H(+) antiporter NhaB (533 aa).

Transmembrane regions (helical) follow at residues 10–30, 67–87, 96–116, 131–165, 209–229, 247–267, 310–330, 355–375, 396–416, 454–474, and 485–505; these read IGNF…SFLI, PGGL…SQVL, VLLL…LLLF, VSLL…FYSI, LLMH…VGEP, IRMS…CYIV, AFIG…VGLI, EEAL…AVII, LVIF…VFVG, ATPN…APLI, and ALPY…IGFL.

This sequence belongs to the NhaB Na(+)/H(+) (TC 2.A.34) antiporter family.

It is found in the cell inner membrane. It catalyses the reaction 2 Na(+)(in) + 3 H(+)(out) = 2 Na(+)(out) + 3 H(+)(in). Na(+)/H(+) antiporter that extrudes sodium in exchange for external protons. This is Na(+)/H(+) antiporter NhaB from Shewanella oneidensis (strain ATCC 700550 / JCM 31522 / CIP 106686 / LMG 19005 / NCIMB 14063 / MR-1).